Here is a 220-residue protein sequence, read N- to C-terminus: Uracil-DNA glycosylase (220 aa).

Catalysis depends on D60, which acts as the Proton acceptor.

It belongs to the uracil-DNA glycosylase (UDG) superfamily. UNG family.

Its subcellular location is the cytoplasm. It catalyses the reaction Hydrolyzes single-stranded DNA or mismatched double-stranded DNA and polynucleotides, releasing free uracil.. In terms of biological role, excises uracil residues from the DNA which can arise as a result of misincorporation of dUMP residues by DNA polymerase or due to deamination of cytosine. The polypeptide is Uracil-DNA glycosylase (Francisella tularensis subsp. tularensis (strain FSC 198)).